Consider the following 612-residue polypeptide: UvrABC system protein C (612 aa).

The region spanning 15-93 (HLPGVYRMYD…IKQHQPKYNV (79 aa)) is the GIY-YIG domain. The region spanning 203 to 238 (SQVIDYLMQKMEIAASELDFETAARFRDQIQSVRAV) is the UVR domain.

The protein belongs to the UvrC family. Interacts with UvrB in an incision complex.

It localises to the cytoplasm. The UvrABC repair system catalyzes the recognition and processing of DNA lesions. UvrC both incises the 5' and 3' sides of the lesion. The N-terminal half is responsible for the 3' incision and the C-terminal half is responsible for the 5' incision. The protein is UvrABC system protein C of Haemophilus ducreyi (strain 35000HP / ATCC 700724).